We begin with the raw amino-acid sequence, 337 residues long: Phenylalanine--tRNA ligase alpha subunit (337 aa).

A Mg(2+)-binding site is contributed by glutamate 258.

The protein belongs to the class-II aminoacyl-tRNA synthetase family. Phe-tRNA synthetase alpha subunit type 1 subfamily. In terms of assembly, tetramer of two alpha and two beta subunits. Mg(2+) serves as cofactor.

The protein resides in the cytoplasm. The catalysed reaction is tRNA(Phe) + L-phenylalanine + ATP = L-phenylalanyl-tRNA(Phe) + AMP + diphosphate + H(+). The polypeptide is Phenylalanine--tRNA ligase alpha subunit (Burkholderia mallei (strain ATCC 23344)).